Reading from the N-terminus, the 368-residue chain is UDP-N-acetylglucosamine--N-acetylmuramyl-(pentapeptide) pyrophosphoryl-undecaprenol N-acetylglucosamine transferase (368 aa).

Residues 13 to 15 (TGG), N127, R168, S200, I254, and Q299 contribute to the UDP-N-acetyl-alpha-D-glucosamine site.

Belongs to the glycosyltransferase 28 family. MurG subfamily.

The protein localises to the cell inner membrane. It carries out the reaction di-trans,octa-cis-undecaprenyl diphospho-N-acetyl-alpha-D-muramoyl-L-alanyl-D-glutamyl-meso-2,6-diaminopimeloyl-D-alanyl-D-alanine + UDP-N-acetyl-alpha-D-glucosamine = di-trans,octa-cis-undecaprenyl diphospho-[N-acetyl-alpha-D-glucosaminyl-(1-&gt;4)]-N-acetyl-alpha-D-muramoyl-L-alanyl-D-glutamyl-meso-2,6-diaminopimeloyl-D-alanyl-D-alanine + UDP + H(+). It functions in the pathway cell wall biogenesis; peptidoglycan biosynthesis. Functionally, cell wall formation. Catalyzes the transfer of a GlcNAc subunit on undecaprenyl-pyrophosphoryl-MurNAc-pentapeptide (lipid intermediate I) to form undecaprenyl-pyrophosphoryl-MurNAc-(pentapeptide)GlcNAc (lipid intermediate II). The chain is UDP-N-acetylglucosamine--N-acetylmuramyl-(pentapeptide) pyrophosphoryl-undecaprenol N-acetylglucosamine transferase from Parabacteroides distasonis (strain ATCC 8503 / DSM 20701 / CIP 104284 / JCM 5825 / NCTC 11152).